The primary structure comprises 509 residues: Maturase K (509 aa).

Belongs to the intron maturase 2 family. MatK subfamily.

Its subcellular location is the plastid. The protein resides in the chloroplast. In terms of biological role, usually encoded in the trnK tRNA gene intron. Probably assists in splicing its own and other chloroplast group II introns. In Stylosanthes hamata (Caribbean stylo), this protein is Maturase K.